Here is a 185-residue protein sequence, read N- to C-terminus: Prenylated Rab acceptor protein 1 (185 aa).

Over 1–78 the chain is Cytoplasmic; the sequence is MAVEKDQQKD…RNVEYYQSNY (78 aa). Residues 30 to 54 form a required for interaction with prenylated RAB3A and VAMP2 region; it reads AGREWLERRRATIRSWGSFVDQRRF. Transmembrane regions (helical) follow at residues 79-94 and 95-112; these read VFVF…ATSP and MLLV…ILYL. Residues 113–131 are Cytoplasmic-facing; sequence RTLQSKFVLFGREVSPAHQ. A run of 2 helical transmembrane segments spans residues 132 to 148 and 149 to 165; these read YALA…LAGA and GSAV…VIGS. The required for interaction with GDI1 stretch occupies residues 165–185; it reads SHAAFHQIEAVDGEELQMEPV. Over 166–185 the chain is Cytoplasmic; it reads HAAFHQIEAVDGEELQMEPV. The segment at 175 to 185 is required for interaction with prenylated RAB3A and VAMP2; it reads VDGEELQMEPV. Residues 175-185 are homodimerization; the sequence is VDGEELQMEPV.

This sequence belongs to the PRA1 family. Homodimer. Interacts with VAMP2 (synaptobrevin-2), prenylated Rab proteins, GDI1, NDRG1 and PCLO.

The protein resides in the cell membrane. It is found in the cytoplasm. Its subcellular location is the golgi apparatus. The protein localises to the cytoplasmic vesicle. It localises to the secretory vesicle. The protein resides in the synaptic vesicle. Its function is as follows. General Rab protein regulator required for vesicle formation from the Golgi complex. May control vesicle docking and fusion by mediating the action of Rab GTPases to the SNARE complexes. In addition it inhibits the removal of Rab GTPases from the membrane by GDI1. This chain is Prenylated Rab acceptor protein 1 (RABAC1), found in Bos taurus (Bovine).